A 206-amino-acid chain; its full sequence is Glycerol-3-phosphate acyltransferase 1 (206 aa).

5 consecutive transmembrane segments (helical) span residues 7-27, 54-74, 81-101, 114-134, and 155-175; these read LVIG…KIFL, ILTC…VYFI, DLSF…WNHF, IVFF…FLVI, and WINF…IMIF.

It belongs to the PlsY family. As to quaternary structure, probably interacts with PlsX.

It localises to the cell membrane. It carries out the reaction an acyl phosphate + sn-glycerol 3-phosphate = a 1-acyl-sn-glycero-3-phosphate + phosphate. The protein operates within lipid metabolism; phospholipid metabolism. In terms of biological role, catalyzes the transfer of an acyl group from acyl-phosphate (acyl-PO(4)) to glycerol-3-phosphate (G3P) to form lysophosphatidic acid (LPA). This enzyme utilizes acyl-phosphate as fatty acyl donor, but not acyl-CoA or acyl-ACP. The chain is Glycerol-3-phosphate acyltransferase 1 from Lactobacillus johnsonii (strain CNCM I-12250 / La1 / NCC 533).